A 357-amino-acid polypeptide reads, in one-letter code: tRNA-specific 2-thiouridylase MnmA (357 aa).

ATP contacts are provided by residues 7-14 (GLSGGVDS) and methionine 33. An interaction with target base in tRNA region spans residues 94-96 (NPD). Cysteine 99 functions as the Nucleophile in the catalytic mechanism. The cysteines at positions 99 and 195 are disulfide-linked. Glycine 123 provides a ligand contact to ATP. The interaction with tRNA stretch occupies residues 145–147 (KDQ). Cysteine 195 (cysteine persulfide intermediate) is an active-site residue. Residues 303–304 (RY) are interaction with tRNA.

This sequence belongs to the MnmA/TRMU family.

The protein resides in the cytoplasm. The catalysed reaction is S-sulfanyl-L-cysteinyl-[protein] + uridine(34) in tRNA + AH2 + ATP = 2-thiouridine(34) in tRNA + L-cysteinyl-[protein] + A + AMP + diphosphate + H(+). Functionally, catalyzes the 2-thiolation of uridine at the wobble position (U34) of tRNA, leading to the formation of s(2)U34. The sequence is that of tRNA-specific 2-thiouridylase MnmA from Akkermansia muciniphila (strain ATCC BAA-835 / DSM 22959 / JCM 33894 / BCRC 81048 / CCUG 64013 / CIP 107961 / Muc).